We begin with the raw amino-acid sequence, 212 residues long: ATP synthase F(0) complex subunit a (212 aa).

The next 6 membrane-spanning stretches (helical) occupy residues Met3–Ser23, Trp58–Leu78, Gln87–Leu107, Ile128–Val148, Leu154–Thr174, and Ala179–Ile199.

This sequence belongs to the ATPase A chain family. As to quaternary structure, component of the ATP synthase complex composed at least of ATP5F1A/subunit alpha, ATP5F1B/subunit beta, ATP5MC1/subunit c (homooctomer), MT-ATP6/subunit a, MT-ATP8/subunit 8, ATP5ME/subunit e, ATP5MF/subunit f, ATP5MG/subunit g, ATP5MK/subunit k, ATP5MJ/subunit j, ATP5F1C/subunit gamma, ATP5F1D/subunit delta, ATP5F1E/subunit epsilon, ATP5PF/subunit F6, ATP5PB/subunit b, ATP5PD/subunit d, ATP5PO/subunit OSCP. ATP synthase complex consists of a soluble F(1) head domain (subunits alpha(3) and beta(3)) - the catalytic core - and a membrane F(0) domain - the membrane proton channel (subunits c, a, 8, e, f, g, k and j). These two domains are linked by a central stalk (subunits gamma, delta, and epsilon) rotating inside the F1 region and a stationary peripheral stalk (subunits F6, b, d, and OSCP). Interacts with DNAJC30; interaction is direct.

The protein resides in the mitochondrion inner membrane. The catalysed reaction is H(+)(in) = H(+)(out). Its function is as follows. Subunit a, of the mitochondrial membrane ATP synthase complex (F(1)F(0) ATP synthase or Complex V) that produces ATP from ADP in the presence of a proton gradient across the membrane which is generated by electron transport complexes of the respiratory chain. ATP synthase complex consist of a soluble F(1) head domain - the catalytic core - and a membrane F(1) domain - the membrane proton channel. These two domains are linked by a central stalk rotating inside the F(1) region and a stationary peripheral stalk. During catalysis, ATP synthesis in the catalytic domain of F(1) is coupled via a rotary mechanism of the central stalk subunits to proton translocation. With the subunit c (ATP5MC1), forms the proton-conducting channel in the F(0) domain, that contains two crucial half-channels (inlet and outlet) that facilitate proton movement from the mitochondrial intermembrane space (IMS) into the matrix. Protons are taken up via the inlet half-channel and released through the outlet half-channel, following a Grotthuss mechanism. The sequence is that of ATP synthase F(0) complex subunit a from Tropidurus montanus (Lizard).